A 245-amino-acid chain; its full sequence is tRNA (guanine-N(1)-)-methyltransferase (245 aa).

S-adenosyl-L-methionine-binding positions include Gly-111 and 131-136 (MGDYVL).

This sequence belongs to the RNA methyltransferase TrmD family. As to quaternary structure, homodimer.

The protein resides in the cytoplasm. It carries out the reaction guanosine(37) in tRNA + S-adenosyl-L-methionine = N(1)-methylguanosine(37) in tRNA + S-adenosyl-L-homocysteine + H(+). Functionally, specifically methylates guanosine-37 in various tRNAs. In Staphylococcus aureus (strain USA300), this protein is tRNA (guanine-N(1)-)-methyltransferase.